We begin with the raw amino-acid sequence, 216 residues long: V-type ATP synthase subunit D (216 aa).

This sequence belongs to the V-ATPase D subunit family.

Produces ATP from ADP in the presence of a proton gradient across the membrane. The chain is V-type ATP synthase subunit D from Clostridium novyi (strain NT).